We begin with the raw amino-acid sequence, 395 residues long: NAD(P)H-quinone oxidoreductase subunit H (395 aa).

This sequence belongs to the complex I 49 kDa subunit family. As to quaternary structure, NDH-1 can be composed of about 15 different subunits; different subcomplexes with different compositions have been identified which probably have different functions.

The protein resides in the cellular thylakoid membrane. The catalysed reaction is a plastoquinone + NADH + (n+1) H(+)(in) = a plastoquinol + NAD(+) + n H(+)(out). It carries out the reaction a plastoquinone + NADPH + (n+1) H(+)(in) = a plastoquinol + NADP(+) + n H(+)(out). NDH-1 shuttles electrons from an unknown electron donor, via FMN and iron-sulfur (Fe-S) centers, to quinones in the respiratory and/or the photosynthetic chain. The immediate electron acceptor for the enzyme in this species is believed to be plastoquinone. Couples the redox reaction to proton translocation, and thus conserves the redox energy in a proton gradient. Cyanobacterial NDH-1 also plays a role in inorganic carbon-concentration. This chain is NAD(P)H-quinone oxidoreductase subunit H, found in Prochlorococcus marinus (strain MIT 9312).